Here is a 156-residue protein sequence, read N- to C-terminus: Large ribosomal subunit protein uL15 (156 aa).

Residues 14–35 are disordered; sequence GSRTHGWGRVGQHRKSGSSGGK.

Belongs to the universal ribosomal protein uL15 family. In terms of assembly, part of the 50S ribosomal subunit.

Functionally, binds to the 23S rRNA. In Pyrobaculum islandicum (strain DSM 4184 / JCM 9189 / GEO3), this protein is Large ribosomal subunit protein uL15.